We begin with the raw amino-acid sequence, 67 residues long: Large ribosomal subunit protein uL29 (67 aa).

This sequence belongs to the universal ribosomal protein uL29 family.

The chain is Large ribosomal subunit protein uL29 from Sorangium cellulosum (strain So ce56) (Polyangium cellulosum (strain So ce56)).